Reading from the N-terminus, the 287-residue chain is Phosphatidylserine decarboxylase proenzyme (287 aa).

Active-site charge relay system; for autoendoproteolytic cleavage activity residues include aspartate 89, histidine 146, and serine 252. Serine 252 acts as the Schiff-base intermediate with substrate; via pyruvic acid; for decarboxylase activity in catalysis. The residue at position 252 (serine 252) is a Pyruvic acid (Ser); by autocatalysis.

It belongs to the phosphatidylserine decarboxylase family. PSD-B subfamily. Prokaryotic type I sub-subfamily. In terms of assembly, heterodimer of a large membrane-associated beta subunit and a small pyruvoyl-containing alpha subunit. It depends on pyruvate as a cofactor. In terms of processing, is synthesized initially as an inactive proenzyme. Formation of the active enzyme involves a self-maturation process in which the active site pyruvoyl group is generated from an internal serine residue via an autocatalytic post-translational modification. Two non-identical subunits are generated from the proenzyme in this reaction, and the pyruvate is formed at the N-terminus of the alpha chain, which is derived from the carboxyl end of the proenzyme. The autoendoproteolytic cleavage occurs by a canonical serine protease mechanism, in which the side chain hydroxyl group of the serine supplies its oxygen atom to form the C-terminus of the beta chain, while the remainder of the serine residue undergoes an oxidative deamination to produce ammonia and the pyruvoyl prosthetic group on the alpha chain. During this reaction, the Ser that is part of the protease active site of the proenzyme becomes the pyruvoyl prosthetic group, which constitutes an essential element of the active site of the mature decarboxylase.

The protein resides in the cell membrane. It carries out the reaction a 1,2-diacyl-sn-glycero-3-phospho-L-serine + H(+) = a 1,2-diacyl-sn-glycero-3-phosphoethanolamine + CO2. Its pathway is phospholipid metabolism; phosphatidylethanolamine biosynthesis; phosphatidylethanolamine from CDP-diacylglycerol: step 2/2. Catalyzes the formation of phosphatidylethanolamine (PtdEtn) from phosphatidylserine (PtdSer). The protein is Phosphatidylserine decarboxylase proenzyme of Shewanella amazonensis (strain ATCC BAA-1098 / SB2B).